Here is a 281-residue protein sequence, read N- to C-terminus: Bifunctional protein FolD (281 aa).

NADP(+) contacts are provided by residues 165-167, Thr192, and Val233; that span reads GRG.

This sequence belongs to the tetrahydrofolate dehydrogenase/cyclohydrolase family. In terms of assembly, homodimer.

The enzyme catalyses (6R)-5,10-methylene-5,6,7,8-tetrahydrofolate + NADP(+) = (6R)-5,10-methenyltetrahydrofolate + NADPH. The catalysed reaction is (6R)-5,10-methenyltetrahydrofolate + H2O = (6R)-10-formyltetrahydrofolate + H(+). Its pathway is one-carbon metabolism; tetrahydrofolate interconversion. In terms of biological role, catalyzes the oxidation of 5,10-methylenetetrahydrofolate to 5,10-methenyltetrahydrofolate and then the hydrolysis of 5,10-methenyltetrahydrofolate to 10-formyltetrahydrofolate. The protein is Bifunctional protein FolD of Mycolicibacterium paratuberculosis (strain ATCC BAA-968 / K-10) (Mycobacterium paratuberculosis).